The following is a 442-amino-acid chain: Cell division protein FtsA (442 aa).

The protein belongs to the FtsA/MreB family. Self-interacts. Interacts with FtsZ.

The protein resides in the cell inner membrane. Cell division protein that is involved in the assembly of the Z ring. May serve as a membrane anchor for the Z ring. The chain is Cell division protein FtsA from Rhizobium meliloti (strain 1021) (Ensifer meliloti).